Reading from the N-terminus, the 390-residue chain is 3-ketoacyl-CoA thiolase (390 aa).

Cys-95 (acyl-thioester intermediate) is an active-site residue. Residues His-346 and Cys-376 each act as proton acceptor in the active site.

It belongs to the thiolase-like superfamily. Thiolase family. In terms of assembly, heterotetramer of two alpha chains (FadB) and two beta chains (FadA).

Its subcellular location is the cytoplasm. The enzyme catalyses an acyl-CoA + acetyl-CoA = a 3-oxoacyl-CoA + CoA. The protein operates within lipid metabolism; fatty acid beta-oxidation. In terms of biological role, catalyzes the final step of fatty acid oxidation in which acetyl-CoA is released and the CoA ester of a fatty acid two carbons shorter is formed. This Acinetobacter baylyi (strain ATCC 33305 / BD413 / ADP1) protein is 3-ketoacyl-CoA thiolase.